The primary structure comprises 498 residues: Zinc finger protein 79 (498 aa).

The disordered stretch occupies residues 1-23 (MLEEGVLPSPGPALPQEENTGEE). The region spanning 38-109 (TFFSSVTVAF…EGEDLRSPSP (72 aa)) is the KRAB domain. 11 consecutive C2H2-type zinc fingers follow at residues 193 to 215 (YACN…QKSH), 221 to 243 (YECS…QRIH), 249 to 271 (YKCS…QRTH), 277 to 299 (YRCS…QRIH), 305 to 327 (YECS…QRTH), 333 to 355 (YKCS…QRIH), 361 to 383 (YRCA…QRTH), 389 to 411 (YKCS…QKTH), 417 to 439 (YKCN…HIIH), 445 to 467 (YECN…QRIH), and 473 to 495 (YECS…QRLH).

The protein belongs to the krueppel C2H2-type zinc-finger protein family.

The protein resides in the nucleus. Its function is as follows. May be involved in transcriptional regulation. The protein is Zinc finger protein 79 (ZNF79) of Homo sapiens (Human).